Here is a 340-residue protein sequence, read N- to C-terminus: Glyceraldehyde-3-phosphate dehydrogenase, cytosolic (340 aa).

Residues 16-17, Asp38, and Arg85 each bind NAD(+); that span reads RI. D-glyceraldehyde 3-phosphate contacts are provided by residues 156–158, Thr187, 216–217, and Arg239; these read SCT and TG. Cys157 acts as the Nucleophile in catalysis. Asn321 serves as a coordination point for NAD(+).

It belongs to the glyceraldehyde-3-phosphate dehydrogenase family. In terms of assembly, homotetramer.

It is found in the cytoplasm. It carries out the reaction D-glyceraldehyde 3-phosphate + phosphate + NAD(+) = (2R)-3-phospho-glyceroyl phosphate + NADH + H(+). It participates in carbohydrate degradation; glycolysis; pyruvate from D-glyceraldehyde 3-phosphate: step 1/5. In terms of biological role, key enzyme in glycolysis that catalyzes the first step of the pathway by converting D-glyceraldehyde 3-phosphate (G3P) into 3-phospho-D-glyceroyl phosphate. Essential for the maintenance of cellular ATP levels and carbohydrate metabolism. The chain is Glyceraldehyde-3-phosphate dehydrogenase, cytosolic from Taxus baccata (English yew).